We begin with the raw amino-acid sequence, 933 residues long: Phospholipase SGR2 (933 aa).

The segment covering 1 to 14 (MEDRETHLGTREVN) has biased composition (basic and acidic residues). The segment at 1 to 22 (MEDRETHLGTREVNETSPDLLK) is disordered. The active site involves S444. 2 disordered regions span residues 475-517 (PDEE…GQDN) and 553-598 (RGGQ…ESVN). Polar residues predominate over residues 505 to 517 (QLNNPEKITGQDN). Residues 553–563 (RGGQEDDHHDS) show a composition bias toward basic and acidic residues. Positions 593–631 (DKESVNSNNEERIKLLQDEVNSLRSKVAQLLSENARILS) form a coiled coil. The DDHD domain occupies 669 to 868 (LEFKVDTFFA…ALFIIKHLYR (200 aa)). A disordered region spans residues 871–903 (PDGPNSPTESTEGDDSPKDSSRPHSWIDRREAD). Over residues 885-902 (DSPKDSSRPHSWIDRREA) the composition is skewed to basic and acidic residues.

As to quaternary structure, forms oligomers. As to expression, expressed in roots, hypocotyls, leaves, stems and floral buds, and, at low levels, in siliques.

Its subcellular location is the vacuole membrane. Its function is as follows. Involved in vacuolar formation or function (e.g. formation of vacuolar membrane 'bulbs'). Required for amyloplast sedimentation in the endodermis during shoot gravitropism, which are thus acting as statoliths. Particularly important for the negative gravitropism leading to leaf movement observed in darkness. This chain is Phospholipase SGR2 (SGR2), found in Arabidopsis thaliana (Mouse-ear cress).